The sequence spans 258 residues: Trans-aconitate 2-methyltransferase (258 aa).

It belongs to the methyltransferase superfamily. Tam family.

It is found in the cytoplasm. The catalysed reaction is trans-aconitate + S-adenosyl-L-methionine = (E)-3-(methoxycarbonyl)pent-2-enedioate + S-adenosyl-L-homocysteine. Functionally, catalyzes the S-adenosylmethionine monomethyl esterification of trans-aconitate. The protein is Trans-aconitate 2-methyltransferase of Acidovorax ebreus (strain TPSY) (Diaphorobacter sp. (strain TPSY)).